Reading from the N-terminus, the 326-residue chain is Tetraacyldisaccharide 4'-kinase (326 aa).

55–62 (TAGGNGKT) lines the ATP pocket.

It belongs to the LpxK family.

The enzyme catalyses a lipid A disaccharide + ATP = a lipid IVA + ADP + H(+). Its pathway is glycolipid biosynthesis; lipid IV(A) biosynthesis; lipid IV(A) from (3R)-3-hydroxytetradecanoyl-[acyl-carrier-protein] and UDP-N-acetyl-alpha-D-glucosamine: step 6/6. In terms of biological role, transfers the gamma-phosphate of ATP to the 4'-position of a tetraacyldisaccharide 1-phosphate intermediate (termed DS-1-P) to form tetraacyldisaccharide 1,4'-bis-phosphate (lipid IVA). This is Tetraacyldisaccharide 4'-kinase from Klebsiella pneumoniae subsp. pneumoniae (strain ATCC 700721 / MGH 78578).